The sequence spans 246 residues: 2-C-methyl-D-erythritol 4-phosphate cytidylyltransferase (246 aa).

The protein belongs to the IspD/TarI cytidylyltransferase family. IspD subfamily.

The catalysed reaction is 2-C-methyl-D-erythritol 4-phosphate + CTP + H(+) = 4-CDP-2-C-methyl-D-erythritol + diphosphate. Its pathway is isoprenoid biosynthesis; isopentenyl diphosphate biosynthesis via DXP pathway; isopentenyl diphosphate from 1-deoxy-D-xylulose 5-phosphate: step 2/6. In terms of biological role, catalyzes the formation of 4-diphosphocytidyl-2-C-methyl-D-erythritol from CTP and 2-C-methyl-D-erythritol 4-phosphate (MEP). This chain is 2-C-methyl-D-erythritol 4-phosphate cytidylyltransferase, found in Chlorobaculum tepidum (strain ATCC 49652 / DSM 12025 / NBRC 103806 / TLS) (Chlorobium tepidum).